The chain runs to 232 residues: NAD(P)H-quinone oxidoreductase subunit K 1 (232 aa).

Cysteine 49, cysteine 50, cysteine 114, and cysteine 145 together coordinate [4Fe-4S] cluster.

It belongs to the complex I 20 kDa subunit family. As to quaternary structure, NDH-1 can be composed of about 15 different subunits; different subcomplexes with different compositions have been identified which probably have different functions. [4Fe-4S] cluster serves as cofactor.

The protein resides in the cell inner membrane. It catalyses the reaction a plastoquinone + NADH + (n+1) H(+)(in) = a plastoquinol + NAD(+) + n H(+)(out). The catalysed reaction is a plastoquinone + NADPH + (n+1) H(+)(in) = a plastoquinol + NADP(+) + n H(+)(out). In terms of biological role, NDH-1 shuttles electrons from an unknown electron donor, via FMN and iron-sulfur (Fe-S) centers, to quinones in the respiratory and/or the photosynthetic chain. The immediate electron acceptor for the enzyme in this species is believed to be plastoquinone. Couples the redox reaction to proton translocation, and thus conserves the redox energy in a proton gradient. Cyanobacterial NDH-1 also plays a role in inorganic carbon-concentration. This Gloeobacter violaceus (strain ATCC 29082 / PCC 7421) protein is NAD(P)H-quinone oxidoreductase subunit K 1.